Here is a 135-residue protein sequence, read N- to C-terminus: Putative pre-16S rRNA nuclease (135 aa).

It belongs to the YqgF nuclease family.

The protein resides in the cytoplasm. Functionally, could be a nuclease involved in processing of the 5'-end of pre-16S rRNA. The chain is Putative pre-16S rRNA nuclease from Thermus thermophilus (strain ATCC 27634 / DSM 579 / HB8).